Consider the following 68-residue polypeptide: Large ribosomal subunit protein uL29 (68 aa).

Belongs to the universal ribosomal protein uL29 family.

The chain is Large ribosomal subunit protein uL29 from Streptococcus sanguinis (strain SK36).